The sequence spans 180 residues: Large ribosomal subunit protein uL5 (180 aa).

Belongs to the universal ribosomal protein uL5 family. In terms of assembly, part of the 50S ribosomal subunit; part of the 5S rRNA/L5/L18/L25 subcomplex. Contacts the 5S rRNA and the P site tRNA. Forms a bridge to the 30S subunit in the 70S ribosome.

Its function is as follows. This is one of the proteins that bind and probably mediate the attachment of the 5S RNA into the large ribosomal subunit, where it forms part of the central protuberance. In the 70S ribosome it contacts protein S13 of the 30S subunit (bridge B1b), connecting the 2 subunits; this bridge is implicated in subunit movement. Contacts the P site tRNA; the 5S rRNA and some of its associated proteins might help stabilize positioning of ribosome-bound tRNAs. The protein is Large ribosomal subunit protein uL5 of Brevibacillus brevis (strain 47 / JCM 6285 / NBRC 100599).